The chain runs to 131 residues: Squamosa promoter-binding protein 1 (131 aa).

Over residues 1–10 the composition is skewed to basic and acidic residues; that stretch reads MDTSKGEGKR. Residues 1-52 form a disordered region; the sequence is MDTSKGEGKRVIKLPGSQEQGEEEDDIGEDSKKTRALTPSGKRASGSTQRSC. An SBP-type zinc finger spans residues 49 to 126; that stretch reads QRSCQVENCA…AGHNERRRKS (78 aa). C52, C57, C74, H77, C93, C96, H100, and C112 together coordinate Zn(2+). A Bipartite nuclear localization signal motif is present at residues 109-125; sequence KRSCRRRLAGHNERRRK.

The protein localises to the nucleus. Functionally, probable transcriptional factor. Binds to the promoter of the SQUAMOSA gene. This is Squamosa promoter-binding protein 1 (SBP1) from Antirrhinum majus (Garden snapdragon).